A 506-amino-acid chain; its full sequence is Lysine--tRNA ligase (506 aa).

Mg(2+)-binding residues include Glu415 and Glu422.

This sequence belongs to the class-II aminoacyl-tRNA synthetase family. Homodimer. It depends on Mg(2+) as a cofactor.

It is found in the cytoplasm. It catalyses the reaction tRNA(Lys) + L-lysine + ATP = L-lysyl-tRNA(Lys) + AMP + diphosphate. This chain is Lysine--tRNA ligase (lysS), found in Buchnera aphidicola subsp. Acyrthosiphon pisum (strain APS) (Acyrthosiphon pisum symbiotic bacterium).